The sequence spans 694 residues: Polyphosphate kinase (694 aa).

An ATP-binding site is contributed by N45. Mg(2+) contacts are provided by R367 and R397. H427 acts as the Phosphohistidine intermediate in catalysis. Positions 460, 553, and 580 each coordinate ATP.

The protein belongs to the polyphosphate kinase 1 (PPK1) family. Mg(2+) is required as a cofactor. In terms of processing, an intermediate of this reaction is the autophosphorylated ppk in which a phosphate is covalently linked to a histidine residue through a N-P bond.

The enzyme catalyses [phosphate](n) + ATP = [phosphate](n+1) + ADP. In terms of biological role, catalyzes the reversible transfer of the terminal phosphate of ATP to form a long-chain polyphosphate (polyP). This Campylobacter jejuni subsp. jejuni serotype O:6 (strain 81116 / NCTC 11828) protein is Polyphosphate kinase.